The chain runs to 171 residues: NADH-quinone oxidoreductase subunit B (171 aa).

[4Fe-4S] cluster-binding residues include C39, C40, C105, and C134.

It belongs to the complex I 20 kDa subunit family. NDH-1 is composed of 14 different subunits. Subunits NuoB, C, D, E, F, and G constitute the peripheral sector of the complex. [4Fe-4S] cluster is required as a cofactor.

Its subcellular location is the cell inner membrane. The catalysed reaction is a quinone + NADH + 5 H(+)(in) = a quinol + NAD(+) + 4 H(+)(out). NDH-1 shuttles electrons from NADH, via FMN and iron-sulfur (Fe-S) centers, to quinones in the respiratory chain. The immediate electron acceptor for the enzyme in this species is believed to be ubiquinone. Couples the redox reaction to proton translocation (for every two electrons transferred, four hydrogen ions are translocated across the cytoplasmic membrane), and thus conserves the redox energy in a proton gradient. In Aliarcobacter butzleri (strain RM4018) (Arcobacter butzleri), this protein is NADH-quinone oxidoreductase subunit B.